Here is a 371-residue protein sequence, read N- to C-terminus: MPSYLRNLVWATLAAGLVSAAPTPSRVSDLTKKSSSTCTFSSAASASASKSSCSTIVLSNIEVPAGKTLDLTDLKDGTKVIFEGTTTFGYKEWSGPLIKISGSDITVEAADGAVINADGSRWWDGEGTNGGKTKPKFFYAHSLDDSTISGLNIKNTPVQAFSIQSDNLIIDGVTIDNSDGDENGGHNTDGFDISESTGVTIRNAVVKNQDDCIAINSGQNIYFTGGTCSGGHGLSIGSVGGRDDNTVKNVTITDSTVTDSANGVRIKTVYDATGSVSDVTFSDITVSGITDYGIVIEQDYENGSPTGTPTSGVPITDLTVKGITGSVESDAVEVYILCGDDACSDWTWSGVDITSGQTSSKCENVPSGASC.

Residues 1–19 form the signal peptide; it reads MPSYLRNLVWATLAAGLVS. Residues 20-34 constitute a propeptide that is removed on maturation; that stretch reads AAPTPSRVSDLTKKS. Cysteine 38 and cysteine 53 are oxidised to a cystine. 7 PbH1 repeats span residues 95–117, 165–195, 196–217, 218–238, 247–268, 276–298, and 310–355; these read GPLI…VINA, SDNL…DISE, STGV…AINS, GQNI…SIGS, VKNV…RIKT, VSDV…VIEQ, and TSGV…DITS. Aspartate 210 serves as the catalytic Proton donor. Cysteine 212 and cysteine 228 form a disulfide bridge. Histidine 232 is a catalytic residue. Asparagine 249 carries N-linked (GlcNAc...) asparagine glycosylation. Disulfide bonds link cysteine 338–cysteine 343 and cysteine 362–cysteine 371.

This sequence belongs to the glycosyl hydrolase 28 family.

The protein resides in the secreted. The enzyme catalyses (1,4-alpha-D-galacturonosyl)n+m + H2O = (1,4-alpha-D-galacturonosyl)n + (1,4-alpha-D-galacturonosyl)m.. This is Polygalacturonase from Penicillium janthinellum (Penicillium vitale).